The sequence spans 152 residues: MEKKLSSENNQLSSENILGLLPHRYPFALVDKVIENIPGERAVAVKNVTINEPQFQGHFPERPLMPGVLIVESMAQVGGIIVTQMQNLPKGLFVFAGINNVKFRKPVVPGDQLIISCDLLSIKRQRFGKVKGEAHVDGKLVCSGELMFSLVD.

Residue His58 is part of the active site.

This sequence belongs to the thioester dehydratase family. FabZ subfamily.

The protein localises to the cytoplasm. The enzyme catalyses a (3R)-hydroxyacyl-[ACP] = a (2E)-enoyl-[ACP] + H2O. Its function is as follows. Involved in unsaturated fatty acids biosynthesis. Catalyzes the dehydration of short chain beta-hydroxyacyl-ACPs and long chain saturated and unsaturated beta-hydroxyacyl-ACPs. The protein is 3-hydroxyacyl-[acyl-carrier-protein] dehydratase FabZ of Prochlorococcus marinus (strain AS9601).